The primary structure comprises 529 residues: uncharacterized protein (529 aa).

Residues methionine 1–glutamate 11 are compositionally biased toward basic and acidic residues. 4 disordered regions span residues methionine 1–serine 222, proline 237–valine 256, alanine 271–proline 372, and glycine 393–threonine 488. A compositionally biased stretch (polar residues) spans methionine 27–proline 40. Residues threonine 83–proline 95 are compositionally biased toward basic residues. The segment covering asparagine 110–alanine 125 has biased composition (polar residues). Position 128 is a phosphoserine (serine 128). The span at threonine 170–glycine 199 shows a compositional bias: polar residues. Phosphoserine is present on serine 217. Polar residues predominate over residues proline 237–glutamate 249. Positions serine 321–alanine 334 are enriched in low complexity. Residues aspartate 336–isoleucine 362 show a composition bias toward polar residues. Residues glutamate 409–alanine 426 are compositionally biased toward basic and acidic residues. Residues alanine 430–arginine 455 show a composition bias toward polar residues. A compositionally biased stretch (low complexity) spans serine 456–serine 470. The segment covering isoleucine 471 to threonine 488 has biased composition (polar residues).

The protein localises to the cytoplasm. This is an uncharacterized protein from Schizosaccharomyces pombe (strain 972 / ATCC 24843) (Fission yeast).